Reading from the N-terminus, the 677-residue chain is Fermitin family homolog 1 (677 aa).

The 558-residue stretch at 96–653 folds into the FERM domain; the sequence is MLRLRLPNLK…HEYIGGYIFL (558 aa). Phosphoserine occurs at positions 170, 179, and 361. In terms of domain architecture, PH spans 377–473; the sequence is KLFRPKKLLP…WMAACMLASK (97 aa).

The protein belongs to the kindlin family. As to quaternary structure, interacts with the cytoplasmic domain of integrins ITGB1 and ITGB3. Expressed in brain, skeletal muscle, kidney, colon, adrenal gland, prostate, and placenta. Weakly or not expressed in heart, thymus, spleen, liver, small intestine, bone marrow, lung and peripheral blood leukocytes. Overexpressed in some colon and lung tumors. In skin, it is localized within the epidermis and particularly in basal keratocytes. Not detected in epidermal melanocytes and dermal fibroblasts.

It is found in the cytoplasm. It localises to the cytoskeleton. The protein localises to the cell junction. Its subcellular location is the focal adhesion. The protein resides in the cell projection. It is found in the ruffle membrane. Functionally, involved in cell adhesion. Contributes to integrin activation. When coexpressed with talin, potentiates activation of ITGA2B. Required for normal keratinocyte proliferation. Required for normal polarization of basal keratinocytes in skin, and for normal cell shape. Required for normal adhesion of keratinocytes to fibronectin and laminin, and for normal keratinocyte migration to wound sites. May mediate TGF-beta 1 signaling in tumor progression. This chain is Fermitin family homolog 1 (FERMT1), found in Homo sapiens (Human).